Here is a 360-residue protein sequence, read N- to C-terminus: Photosystem II protein D1 (360 aa).

A run of 3 helical transmembrane segments spans residues 29-46 (YIGW…TATT), 118-133 (HFLL…EWEL), and 142-156 (WIFV…AASA). His118 is a binding site for chlorophyll a. Tyr126 contacts pheophytin a. [CaMn4O5] cluster-binding residues include Asp170 and Glu189. Residues 197 to 218 (FHMAGVAGVFGGSLFSAMHGSL) traverse the membrane as a helical segment. His198 contacts chlorophyll a. Residues His215 and 264 to 265 (SF) contribute to the a quinone site. Residue His215 participates in Fe cation binding. A Fe cation-binding site is contributed by His272. The helical transmembrane segment at 274 to 288 (FLAAWPVVRIWLTAL) threads the bilayer. His332, Glu333, Asp342, and Ala344 together coordinate [CaMn4O5] cluster. Positions 345-360 (AGEVLPVAVSAPAVHA) are excised as a propeptide.

Belongs to the reaction center PufL/M/PsbA/D family. In terms of assembly, PSII is composed of 1 copy each of membrane proteins PsbA, PsbB, PsbC, PsbD, PsbE, PsbF, PsbH, PsbI, PsbJ, PsbK, PsbL, PsbM, PsbT, PsbX, PsbY, PsbZ, Psb30/Ycf12, at least 3 peripheral proteins of the oxygen-evolving complex and a large number of cofactors. It forms dimeric complexes. Requires The D1/D2 heterodimer binds P680, chlorophylls that are the primary electron donor of PSII, and subsequent electron acceptors. It shares a non-heme iron and each subunit binds pheophytin, quinone, additional chlorophylls, carotenoids and lipids. D1 provides most of the ligands for the Mn4-Ca-O5 cluster of the oxygen-evolving complex (OEC). There is also a Cl(-1) ion associated with D1 and D2, which is required for oxygen evolution. The PSII complex binds additional chlorophylls, carotenoids and specific lipids. as cofactor. Post-translationally, tyr-161 forms a radical intermediate that is referred to as redox-active TyrZ, YZ or Y-Z. In terms of processing, C-terminally processed by CTPA; processing is essential to allow assembly of the oxygen-evolving complex and thus photosynthetic growth.

The protein localises to the plastid. It is found in the chloroplast thylakoid membrane. The catalysed reaction is 2 a plastoquinone + 4 hnu + 2 H2O = 2 a plastoquinol + O2. In terms of biological role, photosystem II (PSII) is a light-driven water:plastoquinone oxidoreductase that uses light energy to abstract electrons from H(2)O, generating O(2) and a proton gradient subsequently used for ATP formation. It consists of a core antenna complex that captures photons, and an electron transfer chain that converts photonic excitation into a charge separation. The D1/D2 (PsbA/PsbD) reaction center heterodimer binds P680, the primary electron donor of PSII as well as several subsequent electron acceptors. The sequence is that of Photosystem II protein D1 from Bumilleriopsis filiformis (Yellow-green alga).